The following is a 426-amino-acid chain: 3-phosphoshikimate 1-carboxyvinyltransferase (426 aa).

3-phosphoshikimate is bound by residues lysine 22, serine 23, and arginine 27. Residue lysine 22 coordinates phosphoenolpyruvate. 2 residues coordinate phosphoenolpyruvate: glycine 96 and arginine 124. Residues serine 170, serine 171, glutamine 172, serine 198, aspartate 314, asparagine 337, and lysine 341 each contribute to the 3-phosphoshikimate site. Glutamine 172 contributes to the phosphoenolpyruvate binding site. Aspartate 314 acts as the Proton acceptor in catalysis. Residues arginine 345, arginine 387, and lysine 412 each contribute to the phosphoenolpyruvate site.

Belongs to the EPSP synthase family. Monomer.

The protein localises to the cytoplasm. It carries out the reaction 3-phosphoshikimate + phosphoenolpyruvate = 5-O-(1-carboxyvinyl)-3-phosphoshikimate + phosphate. The protein operates within metabolic intermediate biosynthesis; chorismate biosynthesis; chorismate from D-erythrose 4-phosphate and phosphoenolpyruvate: step 6/7. Functionally, catalyzes the transfer of the enolpyruvyl moiety of phosphoenolpyruvate (PEP) to the 5-hydroxyl of shikimate-3-phosphate (S3P) to produce enolpyruvyl shikimate-3-phosphate and inorganic phosphate. The chain is 3-phosphoshikimate 1-carboxyvinyltransferase from Shewanella sp. (strain W3-18-1).